A 772-amino-acid chain; its full sequence is Chondroitin sulfate glucuronyltransferase (772 aa).

Residues 1–6 (MRLSSL) lie on the Cytoplasmic side of the membrane. A helical; Signal-anchor for type II membrane protein membrane pass occupies residues 7-29 (LALLRPALPLILGLSLGCSLSLL). At 30 to 772 (RVSWIQGEGE…LFEQEQANST (743 aa)) the chain is on the lumenal side. Residues Asn121 and Asn342 are each glycosylated (N-linked (GlcNAc...) asparagine). Residues 629–662 (ALSPQRSPPGPPGAGPDPPSPPGADPSRGAPIGG) are disordered. Pro residues predominate over residues 634–652 (RSPPGPPGAGPDPPSPPGA).

Belongs to the chondroitin N-acetylgalactosaminyltransferase family. In terms of tissue distribution, ubiquitous. Highly expressed in placenta, small intestine and pancreas.

It is found in the golgi apparatus. The protein resides in the golgi stack membrane. It catalyses the reaction 3-O-(beta-D-GalNAc-(1-&gt;4)-beta-D-GlcA-(1-&gt;3)-beta-D-Gal-(1-&gt;3)-beta-D-Gal-(1-&gt;4)-beta-D-Xyl)-L-seryl-[protein] + UDP-alpha-D-glucuronate = 3-O-(beta-D-GlcA-(1-&gt;3)-beta-D-GalNAc-(1-&gt;4)-beta-D-GlcA-(1-&gt;3)-beta-D-Gal-(1-&gt;3)-beta-D-Gal-(1-&gt;4)-beta-D-Xyl)-L-seryl-[protein] + UDP + H(+). The enzyme catalyses 3-O-{[beta-D-GalNAc-(1-&gt;4)-beta-D-GlcA-(1-&gt;3)](n)-beta-D-GalNAc-(1-&gt;4)-beta-D-GlcA-(1-&gt;3)-beta-D-Gal-(1-&gt;3)-beta-D-Gal-(1-&gt;4)-beta-D-Xyl}-L-seryl-[protein] + UDP-alpha-D-glucuronate = 3-O-{beta-D-GlcA-(1-&gt;3)-[beta-D-GalNAc-(1-&gt;4)-beta-D-GlcA-(1-&gt;3)](n)-beta-D-GalNAc-(1-&gt;4)-beta-D-GlcA-(1-&gt;3)-beta-D-Gal-(1-&gt;3)-beta-D-Gal-(1-&gt;4)-beta-D-Xyl}-L-seryl-[protein] + UDP + H(+). Functionally, transfers glucuronic acid (GlcUA) from UDP-GlcUA to N-acetylgalactosamine residues on the non-reducing end of the elongating chondroitin polymer. Has no N-acetylgalactosaminyltransferase activity. The polypeptide is Chondroitin sulfate glucuronyltransferase (CHPF2) (Homo sapiens (Human)).